Consider the following 205-residue polypeptide: Small ribosomal subunit protein uS4 (205 aa).

Positions 19–45 (IWGRPKSPVNRREYGPGQHGQRRKGKL) are disordered. Residues 94–157 (RRLDAVVYRA…KQLAFVLEAS (64 aa)) enclose the S4 RNA-binding domain.

In terms of assembly, part of the 30S ribosomal subunit. Contacts protein S5. The interaction surface between S4 and S5 is involved in control of translational fidelity. May be methylated on an undetermined residue.

In terms of biological role, one of the primary rRNA binding proteins, it binds directly to 16S rRNA where it nucleates assembly of the body of the 30S subunit. Its function is as follows. With S5 and S12 plays an important role in translational accuracy. This is Small ribosomal subunit protein uS4 from Rhodopseudomonas palustris (strain ATCC BAA-98 / CGA009).